The primary structure comprises 187 residues: UPF0398 protein SAB1311c (187 aa).

This sequence belongs to the UPF0398 family.

This chain is UPF0398 protein SAB1311c, found in Staphylococcus aureus (strain bovine RF122 / ET3-1).